Here is a 397-residue protein sequence, read N- to C-terminus: Protein shisa-8 (397 aa).

Residues 1 to 38 form the signal peptide; sequence MARAGARGLLGGRRPPGLRLALALRLALLLARPPSGRA. Residues 39–138 are Extracellular-facing; it reads GAPEAQGPAA…APRDPGRERS (100 aa). The N-linked (GlcNAc...) asparagine glycan is linked to asparagine 75. The disordered stretch occupies residues 117 to 136; sequence TGRPPARARDTAAPRDPGRE. Residues 123-136 are compositionally biased toward basic and acidic residues; the sequence is RARDTAAPRDPGRE. Residues 139–159 traverse the membrane as a helical segment; that stretch reads HTAVYAVCGVAALLVLAGIGA. At 160–397 the chain is on the cytoplasmic side; the sequence is RLGLERAHSP…RTNSKTEVTV (238 aa). Disordered regions lie at residues 182–250 and 281–303; these read LLKQ…GGSL and FPAL…PDLP. Pro residues-rich tracts occupy residues 188 to 197 and 288 to 303; these read PQEPLPPTLG and PRQP…PDLP.

Belongs to the shisa family. Interacts with AMPAR subunits GRIA1 and GRIA2.

It is found in the membrane. May regulate trafficking and current kinetics of AMPA-type glutamate receptor (AMPAR) at synapses. This is Protein shisa-8 from Homo sapiens (Human).